A 293-amino-acid polypeptide reads, in one-letter code: Ribosomal protein L11 methyltransferase (293 aa).

S-adenosyl-L-methionine contacts are provided by Thr-145, Gly-166, Asp-188, and Asn-230.

Belongs to the methyltransferase superfamily. PrmA family.

The protein resides in the cytoplasm. It carries out the reaction L-lysyl-[protein] + 3 S-adenosyl-L-methionine = N(6),N(6),N(6)-trimethyl-L-lysyl-[protein] + 3 S-adenosyl-L-homocysteine + 3 H(+). Its function is as follows. Methylates ribosomal protein L11. This chain is Ribosomal protein L11 methyltransferase, found in Shewanella halifaxensis (strain HAW-EB4).